We begin with the raw amino-acid sequence, 390 residues long: Serine/threonine/tyrosine-protein kinase HT1 (390 aa).

A Protein kinase domain is found at 86 to 359; that stretch reads LFIGNKFASG…GLPLTSHASL (274 aa). ATP is bound by residues 92 to 100 and Lys113; that span reads FASGAHSRI. The active-site Proton acceptor is the Asp212.

Belongs to the protein kinase superfamily. Ser/Thr protein kinase family. In terms of assembly, interacts with DTX56. Binds to MPK4 and MPK12. Associates to CBC1 and CBC2. In terms of processing, autophosphorylated. In terms of tissue distribution, mainly localizes in guard cells. Expressed at low level in leaves, stems, roots and flowers.

It is found in the cell membrane. The catalysed reaction is L-seryl-[protein] + ATP = O-phospho-L-seryl-[protein] + ADP + H(+). The enzyme catalyses L-threonyl-[protein] + ATP = O-phospho-L-threonyl-[protein] + ADP + H(+). It carries out the reaction L-tyrosyl-[protein] + ATP = O-phospho-L-tyrosyl-[protein] + ADP + H(+). Inhibited by MPK4 and MPK12. Serine/threonine/tyrosine kinase involved in the control of stomatal movement in response to CO(2). Functions as a major negative regulator of CO(2)-induced stomatal closing. Does not seem to be involved in stomatal closure in response to abscisic acid (ABA) or light. Involved in the control of red light-induced stomatal opening. Is epistatic to SRK2E/OST1 function during stomatal responses to red light and altered CO(2). Phosphorylates SRK2E/OST1 and GHR1 to prevents SRK2E/OST1- and GHR1-induced activation of SLAC1, thus preventing stomatal closure. Mediates the phosphorylation of CBC1 and CBC2. In Arabidopsis thaliana (Mouse-ear cress), this protein is Serine/threonine/tyrosine-protein kinase HT1.